An 880-amino-acid polypeptide reads, in one-letter code: Leucine--tRNA ligase (880 aa).

The 'HIGH' region signature appears at 46–56; the sequence is PYPSGALHMGH. A 'KMSKS' region motif is present at residues 638 to 642; sequence KMSKS. An ATP-binding site is contributed by K641.

This sequence belongs to the class-I aminoacyl-tRNA synthetase family.

It is found in the cytoplasm. It carries out the reaction tRNA(Leu) + L-leucine + ATP = L-leucyl-tRNA(Leu) + AMP + diphosphate. The polypeptide is Leucine--tRNA ligase (Xanthomonas oryzae pv. oryzae (strain KACC10331 / KXO85)).